A 483-amino-acid polypeptide reads, in one-letter code: Probable glycosyltransferase 4 (483 aa).

The Cytoplasmic segment spans residues 1-26; sequence MSKLQDRHGGEAAADVGRRARHQRLL. Residues 27–47 traverse the membrane as a helical; Signal-anchor for type II membrane protein segment; it reads LSFPVFPIVLLLLAPCTIFFF. The Lumenal segment spans residues 48 to 483; the sequence is TSGDVPLPRI…KKTSRAARPM (436 aa). The interval 71–119 is disordered; sequence AVAADTSPPPPSPPSSSPPPLSFPPPPPPPSSPPPPALPVVDDHSDTQR. The span at 77–108 shows a compositional bias: pro residues; it reads SPPPPSPPSSSPPPLSFPPPPPPPSSPPPPAL. Asn-448 carries N-linked (GlcNAc...) asparagine glycosylation.

Belongs to the glycosyltransferase 34 family.

Its subcellular location is the golgi apparatus membrane. Functionally, probable glycosyltransferase that may be involved in the biosynthesis of xyloglucan. The chain is Probable glycosyltransferase 4 from Oryza sativa subsp. indica (Rice).